Here is a 249-residue protein sequence, read N- to C-terminus: Beta-crystallin B1 (249 aa).

The tract at residues 1 to 49 is disordered; that stretch reads MSQPAVKASATAAVNPGPDGKGKGAPPPGPAPGSGPAQAPAQPMPAAKG. Ser-2 is subject to N-acetylserine. The segment at 2–55 is N-terminal arm; that stretch reads SQPAVKASATAAVNPGPDGKGKGAPPPGPAPGSGPAQAPAQPMPAAKGDLPPGS. Residues 34-49 are compositionally biased toward low complexity; that stretch reads SGPAQAPAQPMPAAKG. Beta/gamma crystallin 'Greek key' domains are found at residues 56–95 and 96–140; these read YKLV…IVTS and GPWV…RPIR. The tract at residues 141–145 is connecting peptide; the sequence is MDAQE. Beta/gamma crystallin 'Greek key' domains lie at 146 to 187 and 188 to 230; these read HKLC…RVSS and GTWV…RRLR. Positions 232–249 are C-terminal arm; the sequence is RQWHREGCFPVLAAEPPK.

It belongs to the beta/gamma-crystallin family. As to quaternary structure, homo/heterodimer, or complexes of higher-order. The structure of beta-crystallin oligomers seems to be stabilized through interactions between the N-terminal arms. Specific cleavages in the N-terminal arm occur during lens maturation and give rise to truncated forms, leading to impaired oligomerization and protein insolubilization.

Crystallins are the dominant structural components of the vertebrate eye lens. This chain is Beta-crystallin B1 (CRYBB1), found in Sus scrofa (Pig).